A 675-amino-acid polypeptide reads, in one-letter code: Potassium-transporting ATPase ATP-binding subunit (675 aa).

A run of 4 helical transmembrane segments spans residues 34–54 (IMFV…FPDI), 65–85 (LITI…SEAF), 216–236 (IALF…IVTL), and 245–265 (LILP…TTIG). Catalysis depends on Asp-304, which acts as the 4-aspartylphosphate intermediate. Residues Asp-341, Glu-345, 372–379 (FTAETRMS), and Lys-390 contribute to the ATP site. Positions 513 and 517 each coordinate Mg(2+). 3 helical membrane passes run 569-591 (ALTT…ALMM), 611-631 (AIIS…PIAM), and 644-664 (IFIN…FLGI).

The protein belongs to the cation transport ATPase (P-type) (TC 3.A.3) family. Type IA subfamily. In terms of assembly, the system is composed of three essential subunits: KdpA, KdpB and KdpC.

It localises to the cell membrane. It carries out the reaction K(+)(out) + ATP + H2O = K(+)(in) + ADP + phosphate + H(+). Part of the high-affinity ATP-driven potassium transport (or Kdp) system, which catalyzes the hydrolysis of ATP coupled with the electrogenic transport of potassium into the cytoplasm. This subunit is responsible for energy coupling to the transport system and for the release of the potassium ions to the cytoplasm. The protein is Potassium-transporting ATPase ATP-binding subunit of Staphylococcus aureus (strain MSSA476).